Reading from the N-terminus, the 783-residue chain is uncharacterized protein (783 aa).

A DNA-binding region (zn(2)-C6 fungal-type) is located at residues C40 to C66.

The protein localises to the cytoplasm. It is found in the nucleus. This is an uncharacterized protein from Schizosaccharomyces pombe (strain 972 / ATCC 24843) (Fission yeast).